Reading from the N-terminus, the 118-residue chain is Large ribosomal subunit protein bL20 (118 aa).

This sequence belongs to the bacterial ribosomal protein bL20 family.

Functionally, binds directly to 23S ribosomal RNA and is necessary for the in vitro assembly process of the 50S ribosomal subunit. It is not involved in the protein synthesizing functions of that subunit. In Sulfurovum sp. (strain NBC37-1), this protein is Large ribosomal subunit protein bL20.